The sequence spans 247 residues: PF03932 family protein CutC (247 aa).

It belongs to the CutC family.

The protein resides in the cytoplasm. The protein is PF03932 family protein CutC of Klebsiella pneumoniae (strain 342).